A 220-amino-acid chain; its full sequence is Deoxyribose-phosphate aldolase (220 aa).

The active-site Proton donor/acceptor is the Asp-92. Residue Lys-155 is the Schiff-base intermediate with acetaldehyde of the active site. The active-site Proton donor/acceptor is Lys-184.

It belongs to the DeoC/FbaB aldolase family. DeoC type 1 subfamily.

It is found in the cytoplasm. It carries out the reaction 2-deoxy-D-ribose 5-phosphate = D-glyceraldehyde 3-phosphate + acetaldehyde. It participates in carbohydrate degradation; 2-deoxy-D-ribose 1-phosphate degradation; D-glyceraldehyde 3-phosphate and acetaldehyde from 2-deoxy-alpha-D-ribose 1-phosphate: step 2/2. In terms of biological role, catalyzes a reversible aldol reaction between acetaldehyde and D-glyceraldehyde 3-phosphate to generate 2-deoxy-D-ribose 5-phosphate. In Natranaerobius thermophilus (strain ATCC BAA-1301 / DSM 18059 / JW/NM-WN-LF), this protein is Deoxyribose-phosphate aldolase.